The primary structure comprises 294 residues: Elongation factor Ts (294 aa).

An involved in Mg(2+) ion dislocation from EF-Tu region spans residues 81 to 84; sequence TDFV.

Belongs to the EF-Ts family.

It localises to the cytoplasm. Its function is as follows. Associates with the EF-Tu.GDP complex and induces the exchange of GDP to GTP. It remains bound to the aminoacyl-tRNA.EF-Tu.GTP complex up to the GTP hydrolysis stage on the ribosome. This chain is Elongation factor Ts, found in Hydrogenovibrio crunogenus (strain DSM 25203 / XCL-2) (Thiomicrospira crunogena).